A 102-amino-acid polypeptide reads, in one-letter code: Scorpine-like-2 (102 aa).

A signal peptide spans 1–19 (MQTQCTVLQLLVLVALCSC). Residues 63–102 (QQLCLIVDTVQWCNKSCLAAENKEGYCHGTKCKCGIKVSY) enclose the BetaSPN-type CS-alpha/beta domain. 3 disulfides stabilise this stretch: cysteine 66–cysteine 89, cysteine 75–cysteine 94, and cysteine 79–cysteine 96.

Belongs to the long chain scorpion toxin family. Class 3 subfamily. Expressed by the venom gland.

The protein resides in the secreted. In terms of biological role, inhibits voltage-gated potassium channels. The protein is Scorpine-like-2 of Urodacus yaschenkoi (Inland robust scorpion).